We begin with the raw amino-acid sequence, 295 residues long: SPX domain-containing protein 1 (295 aa).

The SPX domain maps to 1–166 (MKFGKSLSSQ…GALIRLPFIQ (166 aa)). The segment at 197 to 227 (NELPVSSEDGRGDSTNEDKPSNPSSSLVNGG) is disordered. Over residues 204–216 (EDGRGDSTNEDKP) the composition is skewed to basic and acidic residues.

In terms of assembly, interacts (via SPX domain) with PHR2 (via C-terminus). Interacts with RLI1 in the nucleus to prevents its positive regulation of leaf inclination during phosphate (Pi) starvation.

It localises to the nucleus. Functionally, involved in plant adaptation to phosphate (Pi) starvation. Inhibits PHR2 DNA-binding activity via a Pi-dependent protein interaction. Suppresses the regulation on expression of PT2 by PHR2 and accumulation of shoot Pi. Optimizes growth under phosphate-limited conditions through a negative feedback loop of the PSI (phosphate starvation-induced) signaling pathway. Regulates the expression of SPX2, SPX3 and SPX5. May be an important link between signal transduction pathways related to phosphate starvation and cold stress. Together with SPX2, plays a negative role in the regulation of leaf inclination by preventing RLI1 transcription factor activity in Pi depleted conditions. The sequence is that of SPX domain-containing protein 1 from Oryza sativa subsp. indica (Rice).